We begin with the raw amino-acid sequence, 310 residues long: Putative S-adenosyl-L-methionine-dependent methyltransferase MAP_2076c (310 aa).

Residues Asp-131 and 160–161 (DL) contribute to the S-adenosyl-L-methionine site.

This sequence belongs to the UPF0677 family.

Its function is as follows. Exhibits S-adenosyl-L-methionine-dependent methyltransferase activity. In Mycolicibacterium paratuberculosis (strain ATCC BAA-968 / K-10) (Mycobacterium paratuberculosis), this protein is Putative S-adenosyl-L-methionine-dependent methyltransferase MAP_2076c.